The following is a 545-amino-acid chain: T-complex protein 1 subunit gamma (545 aa).

Position 1 is an N-acetylmethionine (M1). Positions 1–24 are disordered; sequence MMGHRPVLVLSQNTKRESGRKVQS. A Phosphoserine modification is found at S11. Residue K15 forms a Glycyl lysine isopeptide (Lys-Gly) (interchain with G-Cter in SUMO2) linkage. G42 provides a ligand contact to ADP. G42 serves as a coordination point for ATP. Residue D93 coordinates Mg(2+). ADP contacts are provided by G94, T95, T96, S97, T162, and K163. ATP-binding residues include G94, T95, and T96. S170 bears the Phosphoserine mark. K222 carries the N6-acetyllysine modification. A phosphoserine mark is found at S243 and S244. Y247 is modified (phosphotyrosine). Glycyl lysine isopeptide (Lys-Gly) (interchain with G-Cter in SUMO2) cross-links involve residues K248 and K249. S252 is subject to Phosphoserine. A disulfide bridge connects residues C366 and C372. K381 participates in a covalent cross-link: Glycyl lysine isopeptide (Lys-Gly) (interchain with G-Cter in SUMO2). Residue G411 coordinates ADP. G411 is a binding site for ATP. Residues T430 and T459 each carry the phosphothreonine modification. ADP-binding residues include G482, E483, E497, and K502. ATP is bound at residue G482. E497 contacts ATP. The disordered stretch occupies residues 526-545; the sequence is HKKKGDDQSRQGGAPDAGQE.

Belongs to the TCP-1 chaperonin family. Component of the chaperonin-containing T-complex (TRiC), a hexadecamer composed of two identical back-to-back stacked rings enclosing a protein folding chamber. Each ring is made up of eight different subunits: TCP1/CCT1, CCT2, CCT3, CCT4, CCT5, CCT6A/CCT6, CCT7, CCT8. Interacts with PACRG. Interacts with DNAAF4. Interacts with DLEC1.

The protein resides in the cytoplasm. It carries out the reaction ATP + H2O = ADP + phosphate + H(+). Its function is as follows. Component of the chaperonin-containing T-complex (TRiC), a molecular chaperone complex that assists the folding of actin, tubulin and other proteins upon ATP hydrolysis. The TRiC complex mediates the folding of WRAP53/TCAB1, thereby regulating telomere maintenance. As part of the TRiC complex may play a role in the assembly of BBSome, a complex involved in ciliogenesis regulating transports vesicles to the cilia. This is T-complex protein 1 subunit gamma (CCT3) from Pongo abelii (Sumatran orangutan).